The chain runs to 151 residues: MKNKLLFMMLTILGAPGIAAAAGYDLANSEYNFAVNELSKSSFNQAAIIGQAGTNNSAQLRQGGSKLLAVVAQEGSSNRAKIDQTGDYNLAYIDQAGSANDASISQGAYGNTAMIIQKGSGNKANITQYGTQKTAIVVQRQSQMAIRVTQR.

The N-terminal stretch at 1–21 is a signal peptide; the sequence is MKNKLLFMMLTILGAPGIAAA.

It belongs to the CsgA/CsgB family.

The protein localises to the fimbrium. Curlin is the structural subunit of the curli. Curli are coiled surface structures that assemble preferentially at growth temperatures below 37 degrees Celsius. Curli can bind to fibronectin. The minor subunit is the nucleation component of curlin monomers. The chain is Minor curlin subunit (csgB) from Escherichia coli O157:H7.